A 107-amino-acid polypeptide reads, in one-letter code: U1-lycotoxin-Ls1o (107 aa).

The signal sequence occupies residues 1–20 (MMKVLVVVALLVTLISYSSS). Positions 21–41 (EGIDDLEADELLSLMANEQTR) are excised as a propeptide. Disulfide bonds link cysteine 44-cysteine 59, cysteine 51-cysteine 68, cysteine 58-cysteine 86, and cysteine 70-cysteine 84.

It belongs to the neurotoxin 19 (CSTX) family. 04 (U1-Lctx) subfamily. In terms of tissue distribution, expressed by the venom gland.

The protein localises to the secreted. This chain is U1-lycotoxin-Ls1o, found in Lycosa singoriensis (Wolf spider).